The following is a 73-amino-acid chain: Antimicrobial peptide TsAP-2 (73 aa).

An N-terminal signal peptide occupies residues 1–22 (MQIKHLITIFFLVLIVADHCHA). Residue lysine 39 is modified to Lysine amide. Positions 45-73 (EITSQIEQYRNLQKREAELENLLANLPVY) are excised as a propeptide.

The protein belongs to the non-disulfide-bridged peptide (NDBP) superfamily. Short antimicrobial peptide (group 4) family. Expressed by the venom gland.

Its subcellular location is the secreted. Antimicrobial peptide. Has a high antibacterial activity against the Gram-positive bacterium S.aureus (MIC=5-17.30 uM), the methicillin-resistant S.aureus (MRSA) (MIC=17.30 uM), and E.faecalis (MIC=69.23 uM). Has antifungal activity against Candida spp. and one Cryptococcus neoformans strains with MICs values ranging from 6.25 to 100 uM. Also shows an inhibitory activity on C.albicans biofilms at high concentrations. Has a moderate hemolytic potency (18% at 20 uM). Also inhibits the growth of the five human cancer cell lines tested (the squamous carcinoma cell line H157 (IC(50)=4.1 uM), the lung adenocarcinoma cell line H838 (11.0 uM), the breast carcinoma cell line MCF-7 (6.4 uM), the androgen-independent prostate adenocarcinoma cell line PC3 (13.3 uM) and the glioblastoma cell line U251-MG (15.4 uM)). In the model of polymicrobial sepsis, it exhibits an antibiotic effect, reducing the levels of microorganisms in the infectious focus and the inflammatory responses in the lung and cecum of septic animals. This Tityus serrulatus (Brazilian scorpion) protein is Antimicrobial peptide TsAP-2.